The primary structure comprises 413 residues: Serine hydroxymethyltransferase (413 aa).

Residues Leu-119 and 123 to 125 (GHL) each bind (6S)-5,6,7,8-tetrahydrofolate. Lys-228 is modified (N6-(pyridoxal phosphate)lysine). 351-353 (SPF) lines the (6S)-5,6,7,8-tetrahydrofolate pocket.

It belongs to the SHMT family. In terms of assembly, homodimer. It depends on pyridoxal 5'-phosphate as a cofactor.

It localises to the cytoplasm. The catalysed reaction is (6R)-5,10-methylene-5,6,7,8-tetrahydrofolate + glycine + H2O = (6S)-5,6,7,8-tetrahydrofolate + L-serine. It functions in the pathway one-carbon metabolism; tetrahydrofolate interconversion. It participates in amino-acid biosynthesis; glycine biosynthesis; glycine from L-serine: step 1/1. Functionally, catalyzes the reversible interconversion of serine and glycine with tetrahydrofolate (THF) serving as the one-carbon carrier. This reaction serves as the major source of one-carbon groups required for the biosynthesis of purines, thymidylate, methionine, and other important biomolecules. Also exhibits THF-independent aldolase activity toward beta-hydroxyamino acids, producing glycine and aldehydes, via a retro-aldol mechanism. The chain is Serine hydroxymethyltransferase from Clostridium botulinum (strain Langeland / NCTC 10281 / Type F).